The primary structure comprises 195 residues: Peptidyl-tRNA hydrolase (195 aa).

Residue Tyr-17 participates in tRNA binding. His-22 serves as the catalytic Proton acceptor. TRNA contacts are provided by Tyr-68, Asn-70, and Asn-116.

Belongs to the PTH family. In terms of assembly, monomer.

It localises to the cytoplasm. The catalysed reaction is an N-acyl-L-alpha-aminoacyl-tRNA + H2O = an N-acyl-L-amino acid + a tRNA + H(+). Its function is as follows. Hydrolyzes ribosome-free peptidyl-tRNAs (with 1 or more amino acids incorporated), which drop off the ribosome during protein synthesis, or as a result of ribosome stalling. Catalyzes the release of premature peptidyl moieties from peptidyl-tRNA molecules trapped in stalled 50S ribosomal subunits, and thus maintains levels of free tRNAs and 50S ribosomes. The protein is Peptidyl-tRNA hydrolase of Shewanella baltica (strain OS155 / ATCC BAA-1091).